Consider the following 329-residue polypeptide: Biotin synthase (329 aa).

The Radical SAM core domain maps to 38–262 (NTIQVSTLLS…IMPHSYIRLS (225 aa)). [4Fe-4S] cluster is bound by residues Cys-53, Cys-57, and Cys-60. [2Fe-2S] cluster contacts are provided by Cys-97, Cys-128, Cys-188, and Arg-260.

Belongs to the radical SAM superfamily. Biotin synthase family. Homodimer. The cofactor is [4Fe-4S] cluster. [2Fe-2S] cluster is required as a cofactor.

It catalyses the reaction (4R,5S)-dethiobiotin + (sulfur carrier)-SH + 2 reduced [2Fe-2S]-[ferredoxin] + 2 S-adenosyl-L-methionine = (sulfur carrier)-H + biotin + 2 5'-deoxyadenosine + 2 L-methionine + 2 oxidized [2Fe-2S]-[ferredoxin]. The protein operates within cofactor biosynthesis; biotin biosynthesis; biotin from 7,8-diaminononanoate: step 2/2. Functionally, catalyzes the conversion of dethiobiotin (DTB) to biotin by the insertion of a sulfur atom into dethiobiotin via a radical-based mechanism. The chain is Biotin synthase from Acinetobacter calcoaceticus.